The primary structure comprises 281 residues: Shikimate dehydrogenase (NADP(+)) (281 aa).

Residues 19–21 (SFS) and T66 contribute to the shikimate site. K70 serves as the catalytic Proton acceptor. Residues N91 and D104 each contribute to the shikimate site. Residues 127-131 (GAGGA) and I223 contribute to the NADP(+) site. Residue Y225 participates in shikimate binding. Position 246 (G246) interacts with NADP(+).

The protein belongs to the shikimate dehydrogenase family. Homodimer.

It catalyses the reaction shikimate + NADP(+) = 3-dehydroshikimate + NADPH + H(+). It participates in metabolic intermediate biosynthesis; chorismate biosynthesis; chorismate from D-erythrose 4-phosphate and phosphoenolpyruvate: step 4/7. Involved in the biosynthesis of the chorismate, which leads to the biosynthesis of aromatic amino acids. Catalyzes the reversible NADPH linked reduction of 3-dehydroshikimate (DHSA) to yield shikimate (SA). This chain is Shikimate dehydrogenase (NADP(+)), found in Methanobrevibacter smithii (strain ATCC 35061 / DSM 861 / OCM 144 / PS).